A 144-amino-acid chain; its full sequence is Large ribosomal subunit protein uL15 (144 aa).

The segment at 1-52 (MRLNTLSPAEGAKHAPKRVGRGIGSGLGKTAGRGHKGQNSRSGGGVRRGFEG) is disordered. The span at 21–31 (RGIGSGLGKTA) shows a compositional bias: gly residues.

This sequence belongs to the universal ribosomal protein uL15 family. In terms of assembly, part of the 50S ribosomal subunit.

Its function is as follows. Binds to the 23S rRNA. The chain is Large ribosomal subunit protein uL15 from Yersinia pseudotuberculosis serotype O:1b (strain IP 31758).